A 570-amino-acid polypeptide reads, in one-letter code: FERM domain-containing protein 5 (570 aa).

Residues 17–298 (YSCTVRLLDD…ENQAFYKLEK (282 aa)) enclose the FERM domain. The segment at 308–353 (SNLFFKGSRFRYSGRVAKEVMESSAKIKREPPEIHRAGMVPSRSCP) is interaction with ROCK1. The segment at 344–367 (AGMVPSRSCPSITHGPRLSSVPRT) is disordered. Residue serine 375 is modified to Phosphoserine. The segment at 385–407 (DSAHSTPVRSTSHGDTFLPHVRS) is disordered. A compositionally biased stretch (polar residues) spans 388–398 (HSTPVRSTSHG). Residues 504–524 (LLLVTMGLLFVLLLLLIILTE) traverse the membrane as a helical segment.

Interacts with CTNND1. Interacts with ITGB5 (via cytoplasmic domain) and ROCK1.

The protein resides in the membrane. The protein localises to the cell junction. Its subcellular location is the adherens junction. Functionally, may be involved in regulation of cell migration. May regulate cell-matrix interactions via its interaction with ITGB5 and modifying ITGB5 cytoplasmic tail interactions such as with FERMT2 and TLN1. May regulate ROCK1 kinase activity possibly involved in regulation of actin stress fiber formation. This Homo sapiens (Human) protein is FERM domain-containing protein 5 (FRMD5).